Here is a 246-residue protein sequence, read N- to C-terminus: Large ribosomal subunit protein uL3 (246 aa).

Q151 bears the N5-methylglutamine mark.

Belongs to the universal ribosomal protein uL3 family. Part of the 50S ribosomal subunit. Forms a cluster with proteins L14 and L19. Methylated by PrmB.

In terms of biological role, one of the primary rRNA binding proteins, it binds directly near the 3'-end of the 23S rRNA, where it nucleates assembly of the 50S subunit. The chain is Large ribosomal subunit protein uL3 from Bartonella quintana (strain Toulouse) (Rochalimaea quintana).